The primary structure comprises 178 residues: Protein GrpE (178 aa).

A compositionally biased stretch (polar residues) spans 1–11 (MENTQENPTDQ). Residues 1-31 (MENTQENPTDQTTEETGREAQAAENAAPAAE) are disordered. Low complexity predominate over residues 19–31 (EAQAAENAAPAAE).

This sequence belongs to the GrpE family. Homodimer.

The protein localises to the cytoplasm. Participates actively in the response to hyperosmotic and heat shock by preventing the aggregation of stress-denatured proteins, in association with DnaK and GrpE. It is the nucleotide exchange factor for DnaK and may function as a thermosensor. Unfolded proteins bind initially to DnaJ; upon interaction with the DnaJ-bound protein, DnaK hydrolyzes its bound ATP, resulting in the formation of a stable complex. GrpE releases ADP from DnaK; ATP binding to DnaK triggers the release of the substrate protein, thus completing the reaction cycle. Several rounds of ATP-dependent interactions between DnaJ, DnaK and GrpE are required for fully efficient folding. This Burkholderia thailandensis (strain ATCC 700388 / DSM 13276 / CCUG 48851 / CIP 106301 / E264) protein is Protein GrpE.